Consider the following 165-residue polypeptide: Large ribosomal subunit protein uL10 (165 aa).

It belongs to the universal ribosomal protein uL10 family. Part of the ribosomal stalk of the 50S ribosomal subunit. The N-terminus interacts with L11 and the large rRNA to form the base of the stalk. The C-terminus forms an elongated spine to which L12 dimers bind in a sequential fashion forming a multimeric L10(L12)X complex.

In terms of biological role, forms part of the ribosomal stalk, playing a central role in the interaction of the ribosome with GTP-bound translation factors. The chain is Large ribosomal subunit protein uL10 from Hamiltonella defensa subsp. Acyrthosiphon pisum (strain 5AT).